The chain runs to 273 residues: Secretory carrier-associated membrane protein 6 (273 aa).

The disordered stretch occupies residues 1–69 (MHHDPNPFDE…MGDSKSKARE (69 aa)). The Cytoplasmic portion of the chain corresponds to 1–131 (MHHDPNPFDE…LQKLQYLAFA (131 aa)). A compositionally biased stretch (gly residues) spans 20–30 (NGGGGGGGGGS). A coiled-coil region spans residues 68-94 (RELSSWETDLKRREADIKRREEALRNA). Transmembrane regions (helical) follow at residues 132-152 (SWLG…VCWI), 159-179 (LFFL…LIWY), 194-214 (FGWF…AAIA), and 239-259 (IIGI…LLSI). Over 260-273 (GVLQRVYMYFRGNK) the chain is Cytoplasmic.

It belongs to the SCAMP family.

The protein resides in the cell membrane. The protein localises to the cytoplasmic vesicle. Its subcellular location is the secretory vesicle membrane. Its function is as follows. Probably involved in membrane trafficking. This chain is Secretory carrier-associated membrane protein 6 (SCAMP6), found in Oryza sativa subsp. japonica (Rice).